We begin with the raw amino-acid sequence, 510 residues long: 2,3-bisphosphoglycerate-independent phosphoglycerate mutase (510 aa).

Mn(2+)-binding residues include Asp14 and Ser64. The active-site Phosphoserine intermediate is Ser64. Substrate-binding positions include His125, 155-156 (RD), Arg187, Arg193, 259-262 (RADR), and Lys332. Positions 399, 403, 440, 441, and 459 each coordinate Mn(2+).

This sequence belongs to the BPG-independent phosphoglycerate mutase family. As to quaternary structure, monomer. Mn(2+) is required as a cofactor.

It catalyses the reaction (2R)-2-phosphoglycerate = (2R)-3-phosphoglycerate. The protein operates within carbohydrate degradation; glycolysis; pyruvate from D-glyceraldehyde 3-phosphate: step 3/5. Its function is as follows. Catalyzes the interconversion of 2-phosphoglycerate and 3-phosphoglycerate. Essential for the growth and pathogenicity on the host plant. The sequence is that of 2,3-bisphosphoglycerate-independent phosphoglycerate mutase from Pseudomonas syringae pv. tomato (strain ATCC BAA-871 / DC3000).